The chain runs to 268 residues: Tryptophan synthase alpha chain (268 aa).

Residues glutamate 49 and aspartate 60 each act as proton acceptor in the active site.

The protein belongs to the TrpA family. In terms of assembly, tetramer of two alpha and two beta chains.

It catalyses the reaction (1S,2R)-1-C-(indol-3-yl)glycerol 3-phosphate + L-serine = D-glyceraldehyde 3-phosphate + L-tryptophan + H2O. It participates in amino-acid biosynthesis; L-tryptophan biosynthesis; L-tryptophan from chorismate: step 5/5. Its function is as follows. The alpha subunit is responsible for the aldol cleavage of indoleglycerol phosphate to indole and glyceraldehyde 3-phosphate. This Haemophilus influenzae (strain ATCC 51907 / DSM 11121 / KW20 / Rd) protein is Tryptophan synthase alpha chain.